The sequence spans 187 residues: Peptide deformylase (187 aa).

Residues Cys-114 and His-157 each coordinate Fe cation. The active site involves Glu-158. His-161 is a binding site for Fe cation.

Belongs to the polypeptide deformylase family. Fe(2+) is required as a cofactor.

The catalysed reaction is N-terminal N-formyl-L-methionyl-[peptide] + H2O = N-terminal L-methionyl-[peptide] + formate. Removes the formyl group from the N-terminal Met of newly synthesized proteins. Requires at least a dipeptide for an efficient rate of reaction. N-terminal L-methionine is a prerequisite for activity but the enzyme has broad specificity at other positions. The protein is Peptide deformylase of Enterococcus faecalis (strain ATCC 700802 / V583).